The following is a 450-amino-acid chain: Pancreatic triacylglycerol lipase (450 aa).

Cystine bridges form between cysteine 4–cysteine 10, cysteine 91–cysteine 102, and cysteine 91–cysteine 104. The Nucleophile role is filled by serine 153. An N-linked (GlcNAc...) asparagine glycan is attached at asparagine 167. Aspartate 177 acts as the Charge relay system in catalysis. Glutamate 188, arginine 191, aspartate 193, and aspartate 196 together coordinate Ca(2+). Residues cysteine 238 and cysteine 262 are joined by a disulfide bond. Histidine 264 serves as the catalytic Charge relay system. 3 disulfides stabilise this stretch: cysteine 286/cysteine 297, cysteine 300/cysteine 305, and cysteine 434/cysteine 450. The PLAT domain maps to 339 to 450; that stretch reads WRYKVSVTLS…EEVLLTLNPC (112 aa).

This sequence belongs to the AB hydrolase superfamily. Lipase family. In terms of assembly, forms a 1:1 stoichiometric complex with (pro)colipase/CLPS.

Its subcellular location is the secreted. It catalyses the reaction a triacylglycerol + H2O = a diacylglycerol + a fatty acid + H(+). The catalysed reaction is 1,2,3-tributanoylglycerol + H2O = dibutanoylglycerol + butanoate + H(+). It carries out the reaction 1,2,3-tri-(9Z-octadecenoyl)-glycerol + H2O = di-(9Z)-octadecenoylglycerol + (9Z)-octadecenoate + H(+). The enzyme catalyses all-trans-retinyl hexadecanoate + H2O = all-trans-retinol + hexadecanoate + H(+). It catalyses the reaction 1,2-di-(9Z-octadecenoyl)-glycerol + H2O = (9Z-octadecenoyl)-glycerol + (9Z)-octadecenoate + H(+). With respect to regulation, inhibited by bile salts, is reactivated by (pro)colipase/CLPS. Plays an important role in fat metabolism. It preferentially splits the esters of long-chain fatty acids at positions 1 and 3, producing mainly 2-monoacylglycerol and free fatty acids, and shows considerably higher activity against insoluble emulsified substrates than against soluble ones. This is Pancreatic triacylglycerol lipase (PNLIP) from Sus scrofa (Pig).